Reading from the N-terminus, the 396-residue chain is Ribosomal RNA large subunit methyltransferase I (396 aa).

The PUA domain occupies 2–79 (AVRIKLKPGR…REEEIDREFF (78 aa)).

Belongs to the methyltransferase superfamily. RlmI family.

The protein resides in the cytoplasm. The enzyme catalyses cytidine(1962) in 23S rRNA + S-adenosyl-L-methionine = 5-methylcytidine(1962) in 23S rRNA + S-adenosyl-L-homocysteine + H(+). In terms of biological role, specifically methylates the cytosine at position 1962 (m5C1962) of 23S rRNA. In Shewanella sp. (strain MR-4), this protein is Ribosomal RNA large subunit methyltransferase I.